Here is a 453-residue protein sequence, read N- to C-terminus: MAKRRQKKRTHAQLTPEQEQGIPKSMVIRVGQTSLANHSLNQLVKDFRQIMQPHTAIKLKERKSNKLKDFVVMCGPLGVTHLFMFTQSEKTGNVSLKIARTPQGPTVTFQVLDYSLGRDIKKFLKRPKSLNNDDVLNPPLLVLNGFSTSKRSGEDDQDVNVEKVIVSMFQNIFPPLNPARTSLNSIKRVFMINKDRETGEISMRHYFIDIREVEISRNLKRLYKAKNNLSKTVPNLHRKEDISSLILDHDLGAYTSESEIEDDAIVRVVDNQDVKAKHSQSLKSQRTPVEKKDNKEREKETEEEDVEMEEPKPSENLQPTPRKKAIKLTELGPRLTLKLVKIEEGICSGKVLHHEFVQKSSEEIKALEKRHAAKMRLKEQRKKEQEENIAKKKAVKDAKKQRKLERRKARAAEGGEGQGKDDAMSDDESSSSDSEHYGSVPEDLDSDLFSEVE.

A compositionally biased stretch (basic residues) spans 1-11; sequence MAKRRQKKRTH. 3 disordered regions span residues 1–22, 275–324, and 374–453; these read MAKR…EQGI, KAKH…PRKK, and KMRL…SEVE. A Brix domain is found at 26-348; the sequence is MVIRVGQTSL…LVKIEEGICS (323 aa). A compositionally biased stretch (basic and acidic residues) spans 288 to 300; that stretch reads PVEKKDNKEREKE. Phosphothreonine is present on T301. Basic and acidic residues predominate over residues 374 to 398; that stretch reads KMRLKEQRKKEQEENIAKKKAVKDA. The segment covering 399–409 has biased composition (basic residues); sequence KKQRKLERRKA. The segment covering 410-423 has biased composition (basic and acidic residues); sequence RAAEGGEGQGKDDA. Residues 442–453 are compositionally biased toward acidic residues; the sequence is EDLDSDLFSEVE.

As to quaternary structure, part of a complex that includes BRX1, RPF1, RPF2 and SSF1 or SSF2.

It is found in the nucleus. The protein resides in the nucleolus. Required for biogenesis of the 60S ribosomal subunit. This is Ribosome biogenesis protein SSF1 (SSF1) from Saccharomyces cerevisiae (strain ATCC 204508 / S288c) (Baker's yeast).